A 138-amino-acid chain; its full sequence is Ribosomal RNA large subunit methyltransferase H (138 aa).

Residues Leu57, Gly86, and 105 to 110 (LSPLTF) each bind S-adenosyl-L-methionine.

This sequence belongs to the RNA methyltransferase RlmH family. As to quaternary structure, homodimer.

Its subcellular location is the cytoplasm. The enzyme catalyses pseudouridine(1915) in 23S rRNA + S-adenosyl-L-methionine = N(3)-methylpseudouridine(1915) in 23S rRNA + S-adenosyl-L-homocysteine + H(+). In terms of biological role, specifically methylates the pseudouridine at position 1915 (m3Psi1915) in 23S rRNA. The polypeptide is Ribosomal RNA large subunit methyltransferase H (Prochlorococcus marinus (strain MIT 9301)).